The primary structure comprises 291 residues: 4-hydroxy-tetrahydrodipicolinate synthase (291 aa).

Threonine 44 serves as a coordination point for pyruvate. Tyrosine 132 functions as the Proton donor/acceptor in the catalytic mechanism. Lysine 160 functions as the Schiff-base intermediate with substrate in the catalytic mechanism. Isoleucine 202 is a binding site for pyruvate.

It belongs to the DapA family. Homotetramer; dimer of dimers.

The protein resides in the cytoplasm. The enzyme catalyses L-aspartate 4-semialdehyde + pyruvate = (2S,4S)-4-hydroxy-2,3,4,5-tetrahydrodipicolinate + H2O + H(+). Its pathway is amino-acid biosynthesis; L-lysine biosynthesis via DAP pathway; (S)-tetrahydrodipicolinate from L-aspartate: step 3/4. Its function is as follows. Catalyzes the condensation of (S)-aspartate-beta-semialdehyde [(S)-ASA] and pyruvate to 4-hydroxy-tetrahydrodipicolinate (HTPA). In Zymomonas mobilis subsp. mobilis (strain ATCC 31821 / ZM4 / CP4), this protein is 4-hydroxy-tetrahydrodipicolinate synthase.